The chain runs to 29 residues: Potassium channel toxin alpha-KTx 8.3 (29 aa).

Intrachain disulfides connect cysteine 3–cysteine 19, cysteine 6–cysteine 24, and cysteine 10–cysteine 26.

It belongs to the short scorpion toxin superfamily. Potassium channel inhibitor family. Alpha-KTx 08 subfamily. In terms of tissue distribution, expressed by the venom gland.

The protein localises to the secreted. In terms of biological role, specific and potent inhibitor of ClC-2/CLCN2 chloride channel. It slows ClC-2/CLCN2 activation by increasing the latency to first opening by nearly 8-fold but is unable to inhibit open channels, suggesting that this toxin inhibits channel activation gating. This Leiurus hebraeus (Hebrew deathstalker scorpion) protein is Potassium channel toxin alpha-KTx 8.3.